The chain runs to 435 residues: Cytochrome c biogenesis protein CcsB (435 aa).

3 consecutive transmembrane segments (helical) span residues 11-31 (LRVA…GTAL), 69-89 (SDWF…CSWR), and 159-179 (VGPL…VWGV).

The protein belongs to the Ccs1/CcsB family. As to quaternary structure, may interact with CcsA.

The protein resides in the plastid. It is found in the organellar chromatophore thylakoid membrane. Functionally, required during biogenesis of c-type cytochromes (cytochrome c6 and cytochrome f) at the step of heme attachment. The protein is Cytochrome c biogenesis protein CcsB of Paulinella chromatophora.